The primary structure comprises 21 residues: Large ribosomal subunit protein uL29 (21 aa).

This sequence belongs to the universal ribosomal protein uL29 family.

The polypeptide is Large ribosomal subunit protein uL29 (rpmC) (Brevundimonas diminuta (Pseudomonas diminuta)).